Reading from the N-terminus, the 274-residue chain is Large ribosomal subunit protein uL2 (274 aa).

Disordered stretches follow at residues 28 to 59 and 222 to 274; these read APYA…GGHK and GAAM…RRTK. A compositionally biased stretch (polar residues) spans 39 to 49; the sequence is KSGGRNNNGRI. Residues 229–239 are compositionally biased toward basic and acidic residues; the sequence is DHPHGGGEGRS.

This sequence belongs to the universal ribosomal protein uL2 family. Part of the 50S ribosomal subunit. Forms a bridge to the 30S subunit in the 70S ribosome.

In terms of biological role, one of the primary rRNA binding proteins. Required for association of the 30S and 50S subunits to form the 70S ribosome, for tRNA binding and peptide bond formation. It has been suggested to have peptidyltransferase activity; this is somewhat controversial. Makes several contacts with the 16S rRNA in the 70S ribosome. The protein is Large ribosomal subunit protein uL2 of Marinomonas sp. (strain MWYL1).